The primary structure comprises 885 residues: Protein transport protein SEC24-1 (885 aa).

C164, C167, C186, and C189 together coordinate Zn(2+). Positions 164-189 are zinc finger-like; it reads CRRCRSYLNPFVAFIEQGRRWQCNIC. A disordered region spans residues 296 to 332; the sequence is DDYEESDDDDDEDDDDEEEDNEEEEEEEEDEEDDDDS.

Belongs to the SEC23/SEC24 family. SEC24 subfamily. The COPII coat is composed of at least 5 proteins: the SEC23/24 complex, the SEC13/31 complex, and the protein SAR1. Golgi apparatus membrane; Peripheral membrane protein; Cytoplasmic side.

The protein localises to the cytoplasm. The protein resides in the cytoplasmic vesicle. Its subcellular location is the COPII-coated vesicle membrane. It localises to the endoplasmic reticulum membrane. It is found in the golgi apparatus membrane. Functionally, component of the coat protein complex II (COPII) which promotes the formation of transport vesicles from the endoplasmic reticulum (ER). The coat has two main functions, the physical deformation of the endoplasmic reticulum membrane into vesicles and the selection of cargo molecules. The chain is Protein transport protein SEC24-1 (SEC241) from Saccharomyces uvarum (strain ATCC 76518 / CBS 7001 / CLIB 283 / NBRC 10550 / MCYC 623 / NCYC 2669 / NRRL Y-11845) (Yeast).